The chain runs to 210 residues: Large ribosomal subunit protein uL3 (210 aa).

This sequence belongs to the universal ribosomal protein uL3 family. In terms of assembly, part of the 50S ribosomal subunit. Forms a cluster with proteins L14 and L19.

One of the primary rRNA binding proteins, it binds directly near the 3'-end of the 23S rRNA, where it nucleates assembly of the 50S subunit. This is Large ribosomal subunit protein uL3 from Lawsonia intracellularis (strain PHE/MN1-00).